Here is a 298-residue protein sequence, read N- to C-terminus: Porphobilinogen deaminase (298 aa).

Position 239 is an S-(dipyrrolylmethanemethyl)cysteine (Cys239).

The protein belongs to the HMBS family. Monomer. It depends on dipyrromethane as a cofactor.

It catalyses the reaction 4 porphobilinogen + H2O = hydroxymethylbilane + 4 NH4(+). It participates in porphyrin-containing compound metabolism; protoporphyrin-IX biosynthesis; coproporphyrinogen-III from 5-aminolevulinate: step 2/4. Its function is as follows. Tetrapolymerization of the monopyrrole PBG into the hydroxymethylbilane pre-uroporphyrinogen in several discrete steps. This chain is Porphobilinogen deaminase, found in Ehrlichia canis (strain Jake).